A 200-amino-acid chain; its full sequence is HTH-type transcriptional regulator Hpr (200 aa).

Residues Ala-13–Gly-157 form the HTH marR-type domain. Positions Ile-63–Glu-86 form a DNA-binding region, H-T-H motif.

In terms of assembly, homodimer.

Its function is as follows. Negative regulator of protease production and sporulation. The protein is HTH-type transcriptional regulator Hpr of Geobacillus thermodenitrificans (strain NG80-2).